The chain runs to 731 residues: MDKLVVNYYEYKHPIINKDLAIGAHGGKKFPTLGAWYDVINEYEFQTRCPIILKNSHRNKHFTFACHLKNCPFKVLLSYAGNAASSETSSPSANNNTNPPGTPDHIHHHSNNMNNEDNDNNNGSNNKVSNDSKLDFVTDDLEYHLANTHPDDTNDKVESRSNEVNGNNDDDADANNIFKQQGVTIKNDTEDDSINKASIDRGLDDESGPTHGNDSGNHRHNEEDDVHTQMTKNYSDVVNDEDINVAIANAVANVDSQSNNKHDGKDDDATNNNDGQDNNTNNDHNNNSNINNNNVGSHGISSHSPSSIRDTSMNLDVFNSATDDIPGPFVVTKIEPYHSHPLEDNLSLGKFILTKIPKILQNDLKFDQILESSYNNSNHTVSKFKVSHYVEESGLLDILMQRYGLTAEDFEKRLLSQIARRITTYKARFVLKKKKMGEYNDLQPSSSSNNNNNNDGELSGTNLRSNSIDYAKHQEISSAGTSSNTTKNVNNNKNDSNDDNNGNNNNDASNLMESVLDKTSSHRYQPKKMPSVNKWSKPDQITHSDVSMVGLDESNDGGNENVHPTLAEVDAQEARETAQLAIDKINSYKRSIDDKNGDGHNNSSRNVVDENLINDMDSEDAHKSKRQHLSDITLEERNEDDKLPHEVAEQLRLLSSHLKEVENLHQNNDDDVDDVMVDVDVESQYNKNTTHHNNHHSQPHHDEEDVAGLIGKADDEEDLSDENIQPELRGQ.

Lysine 18 is covalently cross-linked (Glycyl lysine isopeptide (Lys-Gly) (interchain with G-Cter in ubiquitin)). 2 stretches are compositionally biased toward low complexity: residues 84–99 (ASSE…NTNP) and 111–129 (NNMN…NKVS). Disordered regions lie at residues 84–132 (ASSE…SNDS), 146–227 (ANTH…DDVH), 251–308 (VANV…PSSI), and 439–463 (YNDL…GTNL). The segment covering 149-161 (HPDDTNDKVESRS) has biased composition (basic and acidic residues). A compositionally biased stretch (polar residues) spans 177-186 (IFKQQGVTIK). Threonine 189 carries the phosphothreonine modification. Serine 193 is subject to Phosphoserine. Low complexity-rich tracts occupy residues 270–308 (TNNN…PSSI) and 445–454 (SSSSNNNNNN). At serine 467 the chain carries Phosphoserine. A disordered region spans residues 475–539 (EISSAGTSSN…PSVNKWSKPD (65 aa)). Over residues 481-510 (TSSNTTKNVNNNKNDSNDDNNGNNNNDASN) the composition is skewed to low complexity. A phosphoserine mark is found at serine 554 and serine 618. 2 disordered regions span residues 590 to 643 (RSID…DDKL) and 687 to 731 (KNTT…LRGQ). Residue serine 624 is modified to Phosphoserine; by PKC. C-terminal sequence stretches follow at residues 624 to 628 (SKRQH) and 639 to 662 (EDDK…KEVE). Positions 634 to 643 (LEERNEDDKL) are enriched in basic and acidic residues. The segment covering 689–698 (TTHHNNHHSQ) has biased composition (basic residues). Serine 720 carries the phosphoserine; by CK2 modification.

This sequence belongs to the BAF1 family. As to quaternary structure, component of the global genome repair (GGR) complex composed of at least ABF1, RAD7 and RAD16. Interacts with PSE1. In terms of processing, extensively phosphorylated on Ser and Thr residues.

The protein resides in the nucleus. In terms of biological role, general regulatory factor (GRF) that contributes to transcriptional activation of a large number of genes, as well as to DNA replication, silencing and telomere structure. Involved in the transcription activation of a subset of ribosomal protein genes. Binds the ARS-elements found in many promoters. Binds to the sequence 5'-TCN(7)ACG-3'. Influences on genome-wide nucleosome occupancy and affects chromatin structure, and probably dynamics. As a component of the global genome repair (GGR) complex, promotes global genome nucleotide excision repair (GG-NER) which removes DNA damage from nontranscribing DNA. Component of the regulatory network controlling mitotic and meiotic cell cycle progression. This chain is ARS-binding factor 1 (ABF1), found in Saccharomyces cerevisiae (strain ATCC 204508 / S288c) (Baker's yeast).